Reading from the N-terminus, the 128-residue chain is Small ribosomal subunit protein uS13 (128 aa).

A disordered region spans residues P97 to V128. The span at Q101–V128 shows a compositional bias: basic residues.

The protein belongs to the universal ribosomal protein uS13 family. In terms of assembly, part of the 30S ribosomal subunit. Forms a loose heterodimer with protein S19. Forms two bridges to the 50S subunit in the 70S ribosome.

In terms of biological role, located at the top of the head of the 30S subunit, it contacts several helices of the 16S rRNA. In the 70S ribosome it contacts the 23S rRNA (bridge B1a) and protein L5 of the 50S subunit (bridge B1b), connecting the 2 subunits; these bridges are implicated in subunit movement. Contacts the tRNAs in the A and P-sites. This chain is Small ribosomal subunit protein uS13, found in Pseudothermotoga lettingae (strain ATCC BAA-301 / DSM 14385 / NBRC 107922 / TMO) (Thermotoga lettingae).